Here is a 503-residue protein sequence, read N- to C-terminus: MKEYKVYLERARSRQQHFLYPLLFREYIYGLAYSHNFNRSIFLENVGYDKKYSLLIVKRLITRMYQKNHLILWANDSNKNSFWGYNKSFYSQIISEGFAMVVEIPFFLQLSSSLEEAEIIKSYKNLRSIHSIFPFLEDKLTYFNYVSDIRIPYPIHLEILVQILRYWVKDAPFFHLLRLFLCNWNSFLTTKKSISTFSKSHPRFFLFLYNFYVCEYESIFVFLRKKSSHLQLKSFSVFFERIFFYPKREHLVKVFAKDFLYTFTFVKDPNIHYVRYQGKCILASKNAPFLMNKWKHFFIHLWQCFFDVWSQPRMININPLSEHSFQLLGYFSNVRLNRSVVRSQMLQNTFLIEIVIKKLDITVPIIPLIRSLAKAKFCNVLGQPISKPVWADSSDFDIIDRFLRICRNLSHYYNGSSKKKSLYRIKYILRLSCIKTLACKHKSTVRAFLKRSGSEEFLQEFFTEEEEILSLIFPRDSSTLQRLHRNRIWYLDILFSNDLVHDE.

It belongs to the intron maturase 2 family. MatK subfamily.

The protein localises to the plastid. Its subcellular location is the chloroplast. Usually encoded in the trnK tRNA gene intron. Probably assists in splicing its own and other chloroplast group II introns. This Vicia sativa (Spring vetch) protein is Maturase K.